A 159-amino-acid chain; its full sequence is Ribosomal RNA large subunit methyltransferase H (159 aa).

Residues L76, G108, and 127–132 each bind S-adenosyl-L-methionine; that span reads FGLLTL.

The protein belongs to the RNA methyltransferase RlmH family. Homodimer.

Its subcellular location is the cytoplasm. The catalysed reaction is pseudouridine(1915) in 23S rRNA + S-adenosyl-L-methionine = N(3)-methylpseudouridine(1915) in 23S rRNA + S-adenosyl-L-homocysteine + H(+). In terms of biological role, specifically methylates the pseudouridine at position 1915 (m3Psi1915) in 23S rRNA. In Leuconostoc mesenteroides subsp. mesenteroides (strain ATCC 8293 / DSM 20343 / BCRC 11652 / CCM 1803 / JCM 6124 / NCDO 523 / NBRC 100496 / NCIMB 8023 / NCTC 12954 / NRRL B-1118 / 37Y), this protein is Ribosomal RNA large subunit methyltransferase H.